The sequence spans 92 residues: UPF0223 protein SMU_1141c (92 aa).

It belongs to the UPF0223 family.

This is UPF0223 protein SMU_1141c from Streptococcus mutans serotype c (strain ATCC 700610 / UA159).